Consider the following 174-residue polypeptide: Guided entry of tail-anchored proteins factor 1 (174 aa).

Residues 1–8 (MSSAAADH) are Lumenal-facing. A helical membrane pass occupies residues 9–29 (WAWLLVLSFVFGCNVLRILLP). The Cytoplasmic segment spans residues 30 to 99 (SFSSFMSRVL…VKARTAQLAK (70 aa)). A coiled-coil region spans residues 39 to 94 (LQKDAEQESQMRAEIQDMKQELSTVNMMDEFARYARLERKINKMTDKLKTHVKART). Residues 39-97 (LQKDAEQESQMRAEIQDMKQELSTVNMMDEFARYARLERKINKMTDKLKTHVKARTAQL) are interaction with GET3/TRC40. The chain crosses the membrane as a helical span at residues 100-120 (IKWVISVAFYVLQAALMISLI). At 121-148 (WKYYSVPVAVVPSKWITPLDRLVAFPTR) the chain is on the lumenal side. A helical membrane pass occupies residues 149 to 169 (VAGGVGITCWILVCNKVVAIV). The Cytoplasmic portion of the chain corresponds to 170-174 (LHPFS).

Belongs to the WRB/GET1 family. As to quaternary structure, component of the Golgi to ER traffic (GET) complex, which is composed of GET1/WRB, CAMLG/GET2 and GET3/TRC40. Within the complex, GET1 and CAMLG form a heterotetramer which is stabilized by phosphatidylinositol binding and which binds to the GET3 homodimer. Interacts with CAMLG (via C-terminus). GET3 shows a higher affinity for CAMLG than for GET1.

It localises to the endoplasmic reticulum membrane. Its function is as follows. Required for the post-translational delivery of tail-anchored (TA) proteins to the endoplasmic reticulum (ER). Together with CAMLG/GET2, acts as a membrane receptor for soluble GET3/TRC40, which recognizes and selectively binds the transmembrane domain of TA proteins in the cytosol. Required to ensure correct topology and ER insertion of CAMLG. The sequence is that of Guided entry of tail-anchored proteins factor 1 from Homo sapiens (Human).